A 211-amino-acid chain; its full sequence is N-(5'-phosphoribosyl)anthranilate isomerase (211 aa).

Belongs to the TrpF family.

The enzyme catalyses N-(5-phospho-beta-D-ribosyl)anthranilate = 1-(2-carboxyphenylamino)-1-deoxy-D-ribulose 5-phosphate. It functions in the pathway amino-acid biosynthesis; L-tryptophan biosynthesis; L-tryptophan from chorismate: step 3/5. The protein is N-(5'-phosphoribosyl)anthranilate isomerase of Methanococcus maripaludis (strain C6 / ATCC BAA-1332).